Reading from the N-terminus, the 269-residue chain is MTFSFHKMHGLGNDFIVLDARKNPIQMNPALAQALSNRHTGIGCDQLIIIGNGKNQADVSMEIWNADGSEVEACGNATRCVPVFLGRDVIISTAAGLLDARLSDEGACVDMGRPRLSWDEIPLAYAMDTLSMPVAWEDLKEPTAVNMGNPHVVFVVDDVDAVDFGRLGNMIEHDQLFPERINVNIVMVTGKDHLKMRTWERGAGLTRACGTGACATFVAAKRRRLVSGKTQIDLPGGRLVLDENSEGHIIMRGPATYVFKGEADWASFS.

Residues N13, Q46, and N65 each coordinate substrate. The active-site Proton donor is C74. Residues 75–76 (GN), N149, N182, and 200–201 (ER) each bind substrate. Residue C209 is the Proton acceptor of the active site. 210–211 (GT) contacts substrate.

Belongs to the diaminopimelate epimerase family. As to quaternary structure, homodimer.

The protein resides in the cytoplasm. The catalysed reaction is (2S,6S)-2,6-diaminopimelate = meso-2,6-diaminopimelate. The protein operates within amino-acid biosynthesis; L-lysine biosynthesis via DAP pathway; DL-2,6-diaminopimelate from LL-2,6-diaminopimelate: step 1/1. Its function is as follows. Catalyzes the stereoinversion of LL-2,6-diaminopimelate (L,L-DAP) to meso-diaminopimelate (meso-DAP), a precursor of L-lysine and an essential component of the bacterial peptidoglycan. This chain is Diaminopimelate epimerase, found in Zymomonas mobilis subsp. mobilis (strain ATCC 31821 / ZM4 / CP4).